A 205-amino-acid chain; its full sequence is Cryptic plasmid protein C (205 aa).

A disordered region spans residues 142 to 205 (THGYSDPDDP…RAGNAGKGRF (64 aa)). A compositionally biased stretch (polar residues) spans 155–174 (QSMTQAKDLPRNTQEAAQSI). The segment covering 189 to 205 (QAKKPRRRAGNAGKGRF) has biased composition (basic residues).

This Neisseria gonorrhoeae protein is Cryptic plasmid protein C (cppC).